The primary structure comprises 202 residues: Small ribosomal subunit protein uS4c (202 aa).

One can recognise an S4 RNA-binding domain in the interval 90–158; sequence MRLDNIIFRL…ITKNIELSQK (69 aa).

It belongs to the universal ribosomal protein uS4 family. As to quaternary structure, part of the 30S ribosomal subunit. Contacts protein S5. The interaction surface between S4 and S5 is involved in control of translational fidelity.

The protein resides in the plastid. It is found in the chloroplast. One of the primary rRNA binding proteins, it binds directly to 16S rRNA where it nucleates assembly of the body of the 30S subunit. Functionally, with S5 and S12 plays an important role in translational accuracy. The protein is Small ribosomal subunit protein uS4c (rps4) of Marchantia romanica (Liverwort).